Consider the following 270-residue polypeptide: Ethanolamine ammonia-lyase small subunit (270 aa).

The adenosylcob(III)alamin site is built by V161, E182, and C211.

It belongs to the EutC family. The basic unit is a heterodimer which dimerizes to form tetramers. The heterotetramers trimerize; 6 large subunits form a core ring with 6 small subunits projecting outwards. It depends on adenosylcob(III)alamin as a cofactor.

It is found in the bacterial microcompartment. It catalyses the reaction ethanolamine = acetaldehyde + NH4(+). It functions in the pathway amine and polyamine degradation; ethanolamine degradation. Functionally, catalyzes the deamination of various vicinal amino-alcohols to oxo compounds. Allows this organism to utilize ethanolamine as the sole source of nitrogen and carbon in the presence of external vitamin B12. The chain is Ethanolamine ammonia-lyase small subunit from Azotobacter vinelandii (strain DJ / ATCC BAA-1303).